Here is a 291-residue protein sequence, read N- to C-terminus: START domain-containing protein 10 (291 aa).

Met1 carries the post-translational modification N-acetylmethionine. The disordered stretch occupies residues 1-20 (MEKLAASTEPQGPRPVLGRE). Positions 14–224 (RPVLGRESVQ…MYKACLKYPE (211 aa)) constitute an START domain. 3 positions are modified to N6-succinyllysine: Lys94, Lys197, and Lys202. Residues Ser253 and Ser259 each carry the phosphoserine modification. Residues 260–291 (LENIDESAVAESREERMGGAGGEGSDDDTSLT) form a disordered region. Ser284 carries the phosphoserine; by CK2 modification. Position 289 is a phosphoserine (Ser289).

Post-translationally, phosphorylation at Ser-284 by CK2 negatively regulates lipid transfer activity, possibly by decreasing membrane association.

It is found in the cell projection. It localises to the cilium. Its subcellular location is the flagellum. The protein localises to the cytoplasm. The protein resides in the membrane. May play metabolic roles in sperm maturation or fertilization. Phospholipid transfer protein that preferentially selects lipid species containing a palmitoyl or stearoyl chain on the sn-1 and an unsaturated fatty acyl chain (18:1 or 18:2) on the sn-2 position. Able to transfer phosphatidylcholine (PC) and phosphatidyetanolamline (PE) between membranes. This Homo sapiens (Human) protein is START domain-containing protein 10 (STARD10).